We begin with the raw amino-acid sequence, 203 residues long: N-(5'-phosphoribosyl)anthranilate isomerase (203 aa).

The protein belongs to the TrpF family.

It catalyses the reaction N-(5-phospho-beta-D-ribosyl)anthranilate = 1-(2-carboxyphenylamino)-1-deoxy-D-ribulose 5-phosphate. Its pathway is amino-acid biosynthesis; L-tryptophan biosynthesis; L-tryptophan from chorismate: step 3/5. This Geobacter sulfurreducens (strain ATCC 51573 / DSM 12127 / PCA) protein is N-(5'-phosphoribosyl)anthranilate isomerase.